The sequence spans 418 residues: MKAEIIAVGTEILTGQIVNTNAQFLSEKLASLGIDVYFQTAVGDNESRLLSILEIAKGRSNLIILTGGLGPTEDDLTKQTLAKFLGRELSFDPDAVEKLDRFFASRPDYARTPNNERQAQLVEGSTPLPNATGLAVGGILEVDGVTYVVLPGPPSELKPMVNNELVPLLSTGQKLYSRVLRFFGIGESQLVTILSEMIDQQSDPTIAPYAKTGEVTLRLSTKALSQAEADAKFEAVEKEILSHKTFEDQSLSEIFYGYGDDNSLAQVAFDLLKSQGKTISAAESLTAGLFQATLADFAGASAIFSGGFVTYSMEEKSRMLDIPLGDLEEHGVVSAFTAGKMAEQARKLTESDLAVSLTGVAGPDSLEDHPAGTVFIGLASAAGTETIKVNIAGRSRRDVRKIAVLHAFNLVRSTLLNS.

Belongs to the CinA family.

In Streptococcus gordonii (strain Challis / ATCC 35105 / BCRC 15272 / CH1 / DL1 / V288), this protein is Putative competence-damage inducible protein.